Here is a 170-residue protein sequence, read N- to C-terminus: Photosystem II extrinsic protein V (170 aa).

The N-terminal stretch at 1-33 (MASFFSTLRRSLNRLLIALPVLLGLMISTPAQA) is a signal peptide. 4 residues coordinate heme c: cysteine 70, cysteine 73, histidine 74, and histidine 125.

This sequence belongs to the cytochrome c family. PsbV subfamily. As to quaternary structure, PSII is composed of 1 copy each of membrane proteins PsbA, PsbB, PsbC, PsbD, PsbE, PsbF, PsbH, PsbI, PsbJ, PsbK, PsbL, PsbM, PsbT, PsbX, PsbY, PsbZ, Psb30/Ycf12, peripheral proteins PsbO, CyanoQ (PsbQ), PsbU, PsbV and a large number of cofactors. It forms dimeric complexes. Heme c serves as cofactor.

The protein resides in the cellular thylakoid membrane. Its function is as follows. One of the extrinsic, lumenal subunits of photosystem II (PSII). PSII is a light-driven water plastoquinone oxidoreductase, using light energy to abstract electrons from H(2)O, generating a proton gradient subsequently used for ATP formation. The extrinsic proteins stabilize the structure of photosystem II oxygen-evolving complex (OEC), the ion environment of oxygen evolution and protect the OEC against heat-induced inactivation. Low-potential cytochrome c that plays a role in the OEC of PSII. This is Photosystem II extrinsic protein V from Synechococcus sp. (strain CC9311).